The sequence spans 1068 residues: Carbamoyl phosphate synthase large chain (1068 aa).

The tract at residues 1-401 (MPLNKDIKKV…AFLKGTRSLE (401 aa)) is carboxyphosphate synthetic domain. ATP contacts are provided by R129, R169, G175, G176, K208, V210, E215, G241, I242, H243, Q284, and E298. An ATP-grasp 1 domain is found at 133–327 (RNVMSRINGP…IAKVASKIAL (195 aa)). Positions 284, 298, and 300 each coordinate Mg(2+). Mn(2+) is bound by residues Q284, E298, and N300. The interval 402-549 (IGKYSLEHKK…YSTYDVYDEV (148 aa)) is oligomerization domain. Positions 550-932 (EVSKNKKVIV…ALYKGFIGAN (383 aa)) are carbamoyl phosphate synthetic domain. The ATP-grasp 2 domain occupies 674-864 (DELLEKLKIA…IVDIATRVML (191 aa)). ATP-binding residues include R710, K749, L751, E755, G780, V781, H782, S783, Q823, and E835. Mg(2+)-binding residues include Q823, E835, and N837. Positions 823, 835, and 837 each coordinate Mn(2+). Residues 933-1068 (MSIKKEKGTV…ETLYIFDLSN (136 aa)) form the MGS-like domain. The tract at residues 933–1068 (MSIKKEKGTV…ETLYIFDLSN (136 aa)) is allosteric domain.

It belongs to the CarB family. Composed of two chains; the small (or glutamine) chain promotes the hydrolysis of glutamine to ammonia, which is used by the large (or ammonia) chain to synthesize carbamoyl phosphate. Tetramer of heterodimers (alpha,beta)4. The cofactor is Mg(2+). It depends on Mn(2+) as a cofactor.

The enzyme catalyses hydrogencarbonate + L-glutamine + 2 ATP + H2O = carbamoyl phosphate + L-glutamate + 2 ADP + phosphate + 2 H(+). It carries out the reaction hydrogencarbonate + NH4(+) + 2 ATP = carbamoyl phosphate + 2 ADP + phosphate + 2 H(+). Its pathway is amino-acid biosynthesis; L-arginine biosynthesis; carbamoyl phosphate from bicarbonate: step 1/1. It functions in the pathway pyrimidine metabolism; UMP biosynthesis via de novo pathway; (S)-dihydroorotate from bicarbonate: step 1/3. Its function is as follows. Large subunit of the glutamine-dependent carbamoyl phosphate synthetase (CPSase). CPSase catalyzes the formation of carbamoyl phosphate from the ammonia moiety of glutamine, carbonate, and phosphate donated by ATP, constituting the first step of 2 biosynthetic pathways, one leading to arginine and/or urea and the other to pyrimidine nucleotides. The large subunit (synthetase) binds the substrates ammonia (free or transferred from glutamine from the small subunit), hydrogencarbonate and ATP and carries out an ATP-coupled ligase reaction, activating hydrogencarbonate by forming carboxy phosphate which reacts with ammonia to form carbamoyl phosphate. The chain is Carbamoyl phosphate synthase large chain from Clostridium botulinum (strain Kyoto / Type A2).